Reading from the N-terminus, the 207-residue chain is MKTKILSLANEEVGEISLNEDIFAVEFIRDDVIKQVIDWQRAKAMSGNHKTKTVSEVSGTTKKPFKQKGTGNARQGSLRSVQMRGGGVAHGPRVRSHVTKLPKKVRKLGLIHALSEKFAEGRLLVIDSLKLDQPKTSALVNILSKFQGKSFFVIDGNEVDTNFSLAAKNIYNTAIVPQIGANVYDIIRYEYVLLSQEAVSVLEERLR.

Positions 50 to 75 (KTKTVSEVSGTTKKPFKQKGTGNARQ) are disordered.

It belongs to the universal ribosomal protein uL4 family. In terms of assembly, part of the 50S ribosomal subunit.

One of the primary rRNA binding proteins, this protein initially binds near the 5'-end of the 23S rRNA. It is important during the early stages of 50S assembly. It makes multiple contacts with different domains of the 23S rRNA in the assembled 50S subunit and ribosome. In terms of biological role, forms part of the polypeptide exit tunnel. The chain is Large ribosomal subunit protein uL4 from Rickettsia akari (strain Hartford).